Reading from the N-terminus, the 149-residue chain is DnaJ homolog subfamily C member 24 (149 aa).

Residues 11 to 82 enclose the J domain; that stretch reads DWYSILGADP…ETKKEYDLQR (72 aa). One can recognise a DPH-type MB domain in the interval 93–148; it reads VDARIYLEEMSWNEDDHSFSLSCRCGGKYSVSKDEAEEVTLISCDTCSLIIELLHY. Positions 115, 117, 136, and 139 each coordinate Zn(2+).

This sequence belongs to the DPH4 family. In terms of assembly, monomer and homooligomer. Iron binding promotes oligomerization.

It is found in the cytoplasm. It localises to the cytoskeleton. Its pathway is protein modification; peptidyl-diphthamide biosynthesis. Functionally, stimulates the ATPase activity of several Hsp70-type chaperones. This ability is enhanced by iron-binding. The iron-bound form is redox-active and can function as electron carrier. Plays a role in the diphthamide biosynthesis, a post-translational modification of histidine which occurs in translation elongation factor 2 (EEF2). The protein is DnaJ homolog subfamily C member 24 (DNAJC24) of Bos taurus (Bovine).